The chain runs to 289 residues: Pyridoxal kinase PdxY (289 aa).

Substrate contacts are provided by residues S9 and T44–Q45. The ATP site is built by D112, A144, E149, and K182. D225 serves as a coordination point for substrate.

This sequence belongs to the pyridoxine kinase family. PdxY subfamily. Homodimer. It depends on Mg(2+) as a cofactor.

The catalysed reaction is pyridoxal + ATP = pyridoxal 5'-phosphate + ADP + H(+). Its pathway is cofactor metabolism; pyridoxal 5'-phosphate salvage; pyridoxal 5'-phosphate from pyridoxal: step 1/1. Functionally, pyridoxal kinase involved in the salvage pathway of pyridoxal 5'-phosphate (PLP). Catalyzes the phosphorylation of pyridoxal to PLP. This Aliivibrio fischeri (strain ATCC 700601 / ES114) (Vibrio fischeri) protein is Pyridoxal kinase PdxY.